The sequence spans 205 residues: Isochorismatase domain-containing protein 2 (205 aa).

Belongs to the isochorismatase family. As to quaternary structure, interacts with CDKN2A.

The protein resides in the cytoplasm. It localises to the nucleus. This chain is Isochorismatase domain-containing protein 2 (ISOC2), found in Macaca fascicularis (Crab-eating macaque).